Reading from the N-terminus, the 1152-residue chain is P3N-PIPO polyprotein (1152 aa).

The region spanning 292–437 (VMNQQTLTAL…HTLTHRMVQY (146 aa)) is the Peptidase S30 domain. Catalysis depends on for P1 proteinase activity residues histidine 345, aspartate 354, and serine 388. Residues 489–492 (KITC) carry the Involved in interaction with stylet and aphid transmission motif. The short motif at 747 to 749 (PTK) is the Involved in virions binding and aphid transmission element. The Peptidase C6 domain maps to 773–895 (MFVAKDGYCY…ESEMQHYRVG (123 aa)). Catalysis depends on for helper component proteinase activity residues cysteine 781 and histidine 854.

Belongs to the potyviridae P3N-PIPO polyprotein family. As to quaternary structure, interacts (via PIPO domain) with host PCaP1 protein; this interaction may help to anchor the movement complex to the plasma membrane from which the complex could move to the plasmodesmata. Potyviral RNA is expressed as two polyproteins which undergo post-translational proteolytic processing. Genome polyprotein is processed by NIa-pro, P1 and HC-pro proteinases resulting in the production of at least ten individual proteins. P3N-PIPO is cleaved by P1 and HC-pro proteinases resulting in the production of three individual proteins. The P1 proteinase and the HC-pro cleave only their respective C-termini autocatalytically.

The protein resides in the host cell junction. Its subcellular location is the host plasmodesma. It catalyses the reaction Hydrolyzes a Gly-|-Gly bond at its own C-terminus, commonly in the sequence -Tyr-Xaa-Val-Gly-|-Gly, in the processing of the potyviral polyprotein.. In terms of biological role, required for aphid transmission and also has proteolytic activity. Only cleaves a Gly-Gly dipeptide at its own C-terminus. Interacts with virions and aphid stylets. Acts as a suppressor of RNA-mediated gene silencing, also known as post-transcriptional gene silencing (PTGS), a mechanism of plant viral defense that limits the accumulation of viral RNAs. May have RNA-binding activity. Its function is as follows. Allows efficient cell to cell propagation, by bypassing the host cell wall barrier. Transports viral genome to neighboring plant cells directly through plasmosdesmata, without any budding. The chain is P3N-PIPO polyprotein from Carthamus tinctorius (Safflower).